The primary structure comprises 889 residues: Oxysterol-binding protein-related protein 8 (889 aa).

Position 1 is an N-acetylmethionine (Met-1). The tract at residues 1-129 is disordered; that stretch reads MEAALADGEP…SLKVQKKNYR (129 aa). Residues Ser-14, Ser-65, and Ser-68 each carry the phosphoserine modification. The span at 62 to 71 shows a compositional bias: polar residues; that stretch reads PSLSPASLHS. Composition is skewed to basic and acidic residues over residues 73–88, 95–109, and 116–129; these read GFER…KDDS, SKSE…EKDS, and TKKE…KNYR. The PH domain occupies 148-265; that stretch reads VIVMADWLKI…WMDALELALK (118 aa). A phosphoserine mark is found at Ser-314, Ser-328, and Ser-342. The segment covering 321–336 has biased composition (basic and acidic residues); sequence FKDQDLYSDKSDKEND. Positions 321 to 374 are disordered; that stretch reads FKDQDLYSDKSDKENDPEHDESDNEVLGKSEESDTDTSERQDDSYIDPEPVEPL. Over residues 346 to 363 the composition is skewed to basic and acidic residues; sequence VLGKSEESDTDTSERQDD. A 1,2-diacyl-sn-glycero-3-phospho-(1D-myo-inositol 4-phosphate) is bound by residues 420-425, 482-485, and 514-515; these read LSRVVL, KPYN, and HH. A 1,2-diacyl-sn-glycero-3-phospho-L-serine is bound by residues 420 to 425 and Asn-485; that span reads LSRVVL. Ser-540 lines the a 1,2-diacyl-sn-glycero-3-phospho-L-serine pocket. Positions 706, 710, and 714 each coordinate a 1,2-diacyl-sn-glycero-3-phospho-(1D-myo-inositol 4-phosphate). Residues 772 to 823 form a disordered region; the sequence is HRTPMVSVPKMKHKPTRQQKKVVKGYSSPEPDIQDSSGSEAQSVKPSTRRKK. The span at 781-794 shows a compositional bias: basic residues; that stretch reads KMKHKPTRQQKKVV. A compositionally biased stretch (polar residues) spans 805–817; it reads QDSSGSEAQSVKP. A phosphoserine mark is found at Ser-807, Ser-808, Ser-810, and Ser-814. A helical transmembrane segment spans residues 871–888; sequence YFVIFLLILLQVIINFIF.

This sequence belongs to the OSBP family. As to quaternary structure, interacts with SPAG5. Interacts with NUP62. As to expression, widely expressed. Most abundant in liver, spleen, kidney, brain and adipose tissue.

It localises to the endoplasmic reticulum membrane. The protein resides in the nucleus membrane. Functionally, lipid transporter involved in lipid countertransport between the endoplasmic reticulum and the plasma membrane: specifically exchanges phosphatidylserine with phosphatidylinositol 4-phosphate (PI4P), delivering phosphatidylserine to the plasma membrane in exchange for PI4P, which is degraded by the SAC1/SACM1L phosphatase in the endoplasmic reticulum. Binds phosphatidylserine and PI4P in a mutually exclusive manner. Binds oxysterol, 25-hydroxycholesterol and cholesterol. In Mus musculus (Mouse), this protein is Oxysterol-binding protein-related protein 8.